A 391-amino-acid polypeptide reads, in one-letter code: Casein kinase II subunit alpha (391 aa).

The interaction with beta subunit stretch occupies residues 36-41; that stretch reads QDDYQL. Residues 39–324 form the Protein kinase domain; the sequence is YQLVRKLGRG…AREAMEHPYF (286 aa). ATP contacts are provided by residues 45 to 53 and K68; that span reads LGRGKYSEV. D156 acts as the Proton acceptor in catalysis. A phosphothreonine; by CDK1 mark is found at T344 and T360. 2 positions are modified to phosphoserine; by CDK1: S362 and S370.

Belongs to the protein kinase superfamily. Ser/Thr protein kinase family. CK2 subfamily. Heterotetramer composed of two catalytic subunits (alpha chain and/or alpha' chain) and two regulatory subunits (beta chains). The tetramer can exist as a combination of 2 alpha/2 beta, 2 alpha'/2 beta or 1 alpha/1 alpha'/2 beta subunits. Also part of a CK2-SPT16-SSRP1 complex composed of SSRP1, SUPT16H, CSNK2A1, CSNK2A2 and CSNK2B, which forms following UV irradiation. Interacts with RNPS1. Interacts with SNAI1. Interacts with PML. Interacts with CCAR2. Interacts with HIRIP3. Post-translationally, phosphorylated at Thr-344, Thr-360, Ser-362 and Ser-370 by CDK1 in prophase and metaphase and dephosphorylated during anaphase. Phosphorylation does not directly affect casein kinase 2 activity, but may contribute to its regulation by forming binding sites for interacting proteins and/or targeting it to different compartments.

Its subcellular location is the nucleus. The catalysed reaction is L-seryl-[protein] + ATP = O-phospho-L-seryl-[protein] + ADP + H(+). The enzyme catalyses L-threonyl-[protein] + ATP = O-phospho-L-threonyl-[protein] + ADP + H(+). Its activity is regulated as follows. Constitutively active protein kinase whose activity is not directly affected by phosphorylation. Seems to be regulated by level of expression and localization. Its function is as follows. Catalytic subunit of a constitutively active serine/threonine-protein kinase complex that phosphorylates a large number of substrates containing acidic residues C-terminal to the phosphorylated serine or threonine. Regulates numerous cellular processes, such as cell cycle progression, apoptosis and transcription, as well as viral infection. May act as a regulatory node which integrates and coordinates numerous signals leading to an appropriate cellular response. During mitosis, functions as a component of the p53/TP53-dependent spindle assembly checkpoint (SAC) that maintains cyclin-B-CDK1 activity and G2 arrest in response to spindle damage. Also required for p53/TP53-mediated apoptosis, phosphorylating 'Ser-392' of p53/TP53 following UV irradiation. Phosphorylates a number of DNA repair proteins in response to DNA damage, such as MDC1, MRE11, RAD9A, RAD51 and HTATSF1, promoting their recruitment to DNA damage sites. Can also negatively regulate apoptosis. Phosphorylates the caspases CASP9 and CASP2 and the apoptotic regulator NOL3. Phosphorylation protects CASP9 from cleavage and activation by CASP8, and inhibits the dimerization of CASP2 and activation of CASP8. Phosphorylates YY1, protecting YY1 from cleavage by CASP7 during apoptosis. Regulates transcription by direct phosphorylation of RNA polymerases I, II, III and IV. Also phosphorylates and regulates numerous transcription factors including NF-kappa-B, STAT1, CREB1, IRF1, IRF2, ATF1, ATF4, SRF, MAX, JUN, FOS, MYC and MYB. Phosphorylates Hsp90 and its co-chaperones FKBP4 and CDC37, which is essential for chaperone function. Mediates sequential phosphorylation of FNIP1, promoting its gradual interaction with Hsp90, leading to activate both kinase and non-kinase client proteins of Hsp90. Regulates Wnt signaling by phosphorylating CTNNB1 and the transcription factor LEF1. Acts as an ectokinase that phosphorylates several extracellular proteins. Plays an important role in the circadian clock function by phosphorylating BMAL1 at 'Ser-90' which is pivotal for its interaction with CLOCK and which controls CLOCK nuclear entry. Phosphorylates FMR1, promoting FMR1-dependent formation of a membraneless compartment. May phosphorylate histone H2A on 'Ser-1'. The sequence is that of Casein kinase II subunit alpha (CSNK2A1) from Bos taurus (Bovine).